A 106-amino-acid chain; its full sequence is COX assembly mitochondrial protein homolog (106 aa).

A2 bears the N-acetylalanine mark. Residues 28-71 (KERCSEQVQDFTKCCKNSGVLMVVKCRKENSALKECLTAYYNDP) enclose the CHCH domain. 2 short sequence motifs (cx9C motif) span residues 31–41 (CSEQVQDFTKC) and 53–63 (CRKENSALKEC). Disulfide bonds link C31–C63 and C41–C53.

It belongs to the CMC family. Component of the MITRAC (mitochondrial translation regulation assembly intermediate of cytochrome c oxidase complex) complex, the core components of this complex being COA3/MITRAC12 and COX14.

The protein resides in the mitochondrion. Functionally, component of the MITRAC (mitochondrial translation regulation assembly intermediate of cytochrome c oxidase complex) complex, that regulates cytochrome c oxidase assembly. In Homo sapiens (Human), this protein is COX assembly mitochondrial protein homolog (CMC1).